The primary structure comprises 211 residues: Guanylate kinase (211 aa).

One can recognise a Guanylate kinase-like domain in the interval 5–184; sequence GLLIVFSGPS…AAERVKRIIE (180 aa). 12–19 provides a ligand contact to ATP; sequence GPSGVGKG.

This sequence belongs to the guanylate kinase family.

It localises to the cytoplasm. It carries out the reaction GMP + ATP = GDP + ADP. Its function is as follows. Essential for recycling GMP and indirectly, cGMP. This Streptococcus pyogenes serotype M3 (strain SSI-1) protein is Guanylate kinase.